Consider the following 2422-residue polypeptide: Interferon-induced very large GTPase 1 (2422 aa).

The segment at 945–965 is disordered; the sequence is ENFFEDSDSPTKSSSTEPSPH. Residues 954–963 are compositionally biased toward low complexity; the sequence is PTKSSSTEPS. Positions 1479-1720 constitute a VLIG-type G domain; the sequence is DKRLFVLSIL…KISDVKSRVQ (242 aa). GTP-binding positions include 1489 to 1496, 1542 to 1545, and 1619 to 1622; these read GLQSSGKS, DTEG, and TATD.

Belongs to the TRAFAC class dynamin-like GTPase superfamily. Very large inducible GTPase (VLIG) family.

Its subcellular location is the cytoplasm. It is found in the cytosol. The protein resides in the nucleus. The chain is Interferon-induced very large GTPase 1 (GVINP1) from Homo sapiens (Human).